The chain runs to 679 residues: Methionine--tRNA ligase (679 aa).

The 'HIGH' region motif lies at 12-22 (PYANGPIHIGH). Zn(2+) is bound by residues C143, C146, C156, and C158. The 'KMSKS' region motif lies at 328 to 332 (KMSKS). K331 is a binding site for ATP. Residues 537–564 (MMEESKDEAAQETGAAATNPFNDSDQPL) are disordered. The tRNA-binding domain maps to 577 to 679 (DFMKVDLRVA…EGALPGQRVH (103 aa)).

The protein belongs to the class-I aminoacyl-tRNA synthetase family. MetG type 1 subfamily. In terms of assembly, homodimer. Zn(2+) is required as a cofactor.

The protein resides in the cytoplasm. The enzyme catalyses tRNA(Met) + L-methionine + ATP = L-methionyl-tRNA(Met) + AMP + diphosphate. Its function is as follows. Is required not only for elongation of protein synthesis but also for the initiation of all mRNA translation through initiator tRNA(fMet) aminoacylation. The chain is Methionine--tRNA ligase from Rhodopirellula baltica (strain DSM 10527 / NCIMB 13988 / SH1).